Consider the following 160-residue polypeptide: Cyclic pyranopterin monophosphate synthase (160 aa).

Substrate contacts are provided by residues 77 to 79 (MCH) and 114 to 115 (ME). Aspartate 129 is a catalytic residue.

Belongs to the MoaC family. Homohexamer; trimer of dimers.

The enzyme catalyses (8S)-3',8-cyclo-7,8-dihydroguanosine 5'-triphosphate = cyclic pyranopterin phosphate + diphosphate. Its pathway is cofactor biosynthesis; molybdopterin biosynthesis. Catalyzes the conversion of (8S)-3',8-cyclo-7,8-dihydroguanosine 5'-triphosphate to cyclic pyranopterin monophosphate (cPMP). This is Cyclic pyranopterin monophosphate synthase from Listeria monocytogenes serovar 1/2a (strain ATCC BAA-679 / EGD-e).